Reading from the N-terminus, the 285-residue chain is NADPH-dependent 7-cyano-7-deazaguanine reductase (285 aa).

Residue 80–82 (VES) participates in substrate binding. 82–83 (SK) contacts NADPH. Cys-191 functions as the Thioimide intermediate in the catalytic mechanism. Asp-198 (proton donor) is an active-site residue. 231–232 (HE) is a substrate binding site. Residue 260 to 261 (RG) participates in NADPH binding.

It belongs to the GTP cyclohydrolase I family. QueF type 2 subfamily. As to quaternary structure, homodimer.

It is found in the cytoplasm. The catalysed reaction is 7-aminomethyl-7-carbaguanine + 2 NADP(+) = 7-cyano-7-deazaguanine + 2 NADPH + 3 H(+). Its pathway is tRNA modification; tRNA-queuosine biosynthesis. Its function is as follows. Catalyzes the NADPH-dependent reduction of 7-cyano-7-deazaguanine (preQ0) to 7-aminomethyl-7-deazaguanine (preQ1). This is NADPH-dependent 7-cyano-7-deazaguanine reductase from Psychrobacter cryohalolentis (strain ATCC BAA-1226 / DSM 17306 / VKM B-2378 / K5).